The following is a 131-amino-acid chain: Small ribosomal subunit protein bS6 (131 aa).

The segment at 98 to 131 (EASPMVKAKDERRERREDFANETADDSEAGDSEE) is disordered. Positions 104 to 116 (KAKDERRERREDF) are enriched in basic and acidic residues. Over residues 120-131 (TADDSEAGDSEE) the composition is skewed to acidic residues.

This sequence belongs to the bacterial ribosomal protein bS6 family.

In terms of biological role, binds together with bS18 to 16S ribosomal RNA. This Klebsiella pneumoniae (strain 342) protein is Small ribosomal subunit protein bS6.